The chain runs to 457 residues: Trigger factor (457 aa).

The PPIase FKBP-type domain occupies 162–243 (GDFVSIDLSA…VQTVKERELP (82 aa)). Positions 434–457 (AELFGSSEDETEADASDSAESEDK) are disordered. Residues 440–457 (SEDETEADASDSAESEDK) show a composition bias toward acidic residues.

It belongs to the FKBP-type PPIase family. Tig subfamily.

It localises to the cytoplasm. The enzyme catalyses [protein]-peptidylproline (omega=180) = [protein]-peptidylproline (omega=0). Its function is as follows. Involved in protein export. Acts as a chaperone by maintaining the newly synthesized protein in an open conformation. Functions as a peptidyl-prolyl cis-trans isomerase. The protein is Trigger factor of Rhodococcus erythropolis (strain PR4 / NBRC 100887).